The following is a 117-amino-acid chain: Large ribosomal subunit protein bL20c (117 aa).

The protein belongs to the bacterial ribosomal protein bL20 family.

The protein resides in the plastid. It localises to the chloroplast. Its function is as follows. Binds directly to 23S ribosomal RNA and is necessary for the in vitro assembly process of the 50S ribosomal subunit. It is not involved in the protein synthesizing functions of that subunit. In Calycanthus floridus var. glaucus (Eastern sweetshrub), this protein is Large ribosomal subunit protein bL20c.